The primary structure comprises 313 residues: Adhesin MafA 1 (313 aa).

The first 14 residues, 1–14 (MKILLLLIPLVLTA), serve as a signal peptide directing secretion. A lipid anchor (N-palmitoyl cysteine) is attached at cysteine 15. The S-diacylglycerol cysteine moiety is linked to residue cysteine 15. The segment covering 282 to 298 (GDTTAQNRPDFKQNNGK) has biased composition (polar residues). The segment at 282–313 (GDTTAQNRPDFKQNNGKNPDVGNEVIRRRKGG) is disordered.

Belongs to the MafA family.

It localises to the cell outer membrane. This chain is Adhesin MafA 1 (mafA1), found in Neisseria meningitidis serogroup C / serotype 2a (strain ATCC 700532 / DSM 15464 / FAM18).